The primary structure comprises 1203 residues: DNA-directed RNA polymerase subunit beta (1203 aa).

The span at 1174–1195 shows a compositional bias: basic and acidic residues; sequence AAQEAKAAFEAEEAEKATKAEA. Residues 1174–1203 are disordered; the sequence is AAQEAKAAFEAEEAEKATKAEATEEAAEQE.

Belongs to the RNA polymerase beta chain family. In terms of assembly, the RNAP catalytic core consists of 2 alpha, 1 beta, 1 beta' and 1 omega subunit. When a sigma factor is associated with the core the holoenzyme is formed, which can initiate transcription.

It catalyses the reaction RNA(n) + a ribonucleoside 5'-triphosphate = RNA(n+1) + diphosphate. DNA-dependent RNA polymerase catalyzes the transcription of DNA into RNA using the four ribonucleoside triphosphates as substrates. The sequence is that of DNA-directed RNA polymerase subunit beta from Streptococcus pneumoniae (strain ATCC 700669 / Spain 23F-1).